Consider the following 286-residue polypeptide: Polyamine aminopropyltransferase (286 aa).

One can recognise a PABS domain in the interval 5–238; the sequence is TMWHETLHDQ…GIMTFAWATN (234 aa). Glutamine 33 contacts S-methyl-5'-thioadenosine. 2 residues coordinate spermidine: histidine 64 and aspartate 88. Residues glutamate 108 and 140–141 contribute to the S-methyl-5'-thioadenosine site; that span reads DG. Residue aspartate 158 is the Proton acceptor of the active site. 158–161 is a binding site for spermidine; sequence DCTD. Proline 165 is a binding site for S-methyl-5'-thioadenosine.

This sequence belongs to the spermidine/spermine synthase family. In terms of assembly, homodimer or homotetramer.

Its subcellular location is the cytoplasm. The enzyme catalyses S-adenosyl 3-(methylsulfanyl)propylamine + putrescine = S-methyl-5'-thioadenosine + spermidine + H(+). The protein operates within amine and polyamine biosynthesis; spermidine biosynthesis; spermidine from putrescine: step 1/1. In terms of biological role, catalyzes the irreversible transfer of a propylamine group from the amino donor S-adenosylmethioninamine (decarboxy-AdoMet) to putrescine (1,4-diaminobutane) to yield spermidine. In Salmonella paratyphi B (strain ATCC BAA-1250 / SPB7), this protein is Polyamine aminopropyltransferase.